We begin with the raw amino-acid sequence, 118 residues long: Ribonuclease P protein component (118 aa).

Belongs to the RnpA family. Consists of a catalytic RNA component (M1 or rnpB) and a protein subunit.

It catalyses the reaction Endonucleolytic cleavage of RNA, removing 5'-extranucleotides from tRNA precursor.. Its function is as follows. RNaseP catalyzes the removal of the 5'-leader sequence from pre-tRNA to produce the mature 5'-terminus. It can also cleave other RNA substrates such as 4.5S RNA. The protein component plays an auxiliary but essential role in vivo by binding to the 5'-leader sequence and broadening the substrate specificity of the ribozyme. The protein is Ribonuclease P protein component of Shewanella oneidensis (strain ATCC 700550 / JCM 31522 / CIP 106686 / LMG 19005 / NCIMB 14063 / MR-1).